The chain runs to 337 residues: Ketol-acid reductoisomerase (NADP(+)) (337 aa).

In terms of domain architecture, KARI N-terminal Rossmann spans Val3–Thr183. NADP(+) is bound by residues Tyr26–Gln29, Lys49, Ser52, Ser54, and Asp84–Gln87. The active site involves His109. Gly135 serves as a coordination point for NADP(+). One can recognise a KARI C-terminal knotted domain in the interval Thr184–Val329. Positions 192, 196, 228, and 232 each coordinate Mg(2+). Ser253 contacts substrate.

The protein belongs to the ketol-acid reductoisomerase family. Requires Mg(2+) as cofactor.

The catalysed reaction is (2R)-2,3-dihydroxy-3-methylbutanoate + NADP(+) = (2S)-2-acetolactate + NADPH + H(+). The enzyme catalyses (2R,3R)-2,3-dihydroxy-3-methylpentanoate + NADP(+) = (S)-2-ethyl-2-hydroxy-3-oxobutanoate + NADPH + H(+). It functions in the pathway amino-acid biosynthesis; L-isoleucine biosynthesis; L-isoleucine from 2-oxobutanoate: step 2/4. Its pathway is amino-acid biosynthesis; L-valine biosynthesis; L-valine from pyruvate: step 2/4. Involved in the biosynthesis of branched-chain amino acids (BCAA). Catalyzes an alkyl-migration followed by a ketol-acid reduction of (S)-2-acetolactate (S2AL) to yield (R)-2,3-dihydroxy-isovalerate. In the isomerase reaction, S2AL is rearranged via a Mg-dependent methyl migration to produce 3-hydroxy-3-methyl-2-ketobutyrate (HMKB). In the reductase reaction, this 2-ketoacid undergoes a metal-dependent reduction by NADPH to yield (R)-2,3-dihydroxy-isovalerate. In Rhodococcus opacus (strain B4), this protein is Ketol-acid reductoisomerase (NADP(+)).